The chain runs to 256 residues: uncharacterized protein (256 aa).

This is an uncharacterized protein from Saccharomyces cerevisiae (strain ATCC 204508 / S288c) (Baker's yeast).